The following is a 179-amino-acid chain: Large ribosomal subunit protein uL5 (179 aa).

It belongs to the universal ribosomal protein uL5 family. As to quaternary structure, part of the 50S ribosomal subunit; part of the 5S rRNA/L5/L18/L25 subcomplex. Contacts the 5S rRNA and the P site tRNA. Forms a bridge to the 30S subunit in the 70S ribosome.

This is one of the proteins that bind and probably mediate the attachment of the 5S RNA into the large ribosomal subunit, where it forms part of the central protuberance. In the 70S ribosome it contacts protein S13 of the 30S subunit (bridge B1b), connecting the 2 subunits; this bridge is implicated in subunit movement. Contacts the P site tRNA; the 5S rRNA and some of its associated proteins might help stabilize positioning of ribosome-bound tRNAs. In Halalkalibacterium halodurans (strain ATCC BAA-125 / DSM 18197 / FERM 7344 / JCM 9153 / C-125) (Bacillus halodurans), this protein is Large ribosomal subunit protein uL5.